A 692-amino-acid polypeptide reads, in one-letter code: Alpha-amylase SusG (692 aa).

The first 22 residues, 1–22 (MNKHLHFLSLLWLSMLMAFMTA), serve as a signal peptide directing secretion. The N-palmitoyl cysteine moiety is linked to residue C23. The S-diacylglycerol cysteine moiety is linked to residue C23. Positions 73, 75, 77, 79, and 81 each coordinate Mg(2+). N153 provides a ligand contact to Ca(2+). 3 starch binding regions span residues H154, 260–263 (YYGE), and 330–333 (NIMF). D352 is a Ca(2+) binding site. The interval 386-392 (RLDAVKH) is starch binding. D388 functions as the Nucleophile in the catalytic mechanism. H392 is a Ca(2+) binding site. E431 functions as the Proton donor in the catalytic mechanism. Regions of interest (starch binding) are located at D437 and R457.

This sequence belongs to the glycosyl hydrolase 13 family. In terms of assembly, monomer. Ca(2+) is required as a cofactor.

It is found in the cell outer membrane. The catalysed reaction is Endohydrolysis of (1-&gt;4)-alpha-D-glucosidic linkages in polysaccharides containing three or more (1-&gt;4)-alpha-linked D-glucose units.. It functions in the pathway glycan degradation; starch degradation. Functionally, alpha-amylase that cleaves starch into oligosaccharides before internalization for degradation, the first step in starch degradation. This is Alpha-amylase SusG (susG) from Bacteroides thetaiotaomicron (strain ATCC 29148 / DSM 2079 / JCM 5827 / CCUG 10774 / NCTC 10582 / VPI-5482 / E50).